The primary structure comprises 792 residues: Oxidoreductase cns1 (792 aa).

Interacts with cns2.

It localises to the lipid droplet. The protein operates within secondary metabolite biosynthesis. Functionally, oxidoreductase; part of the gene cluster that mediates the biosynthesis of cordycepin (COR) and pentostatin (PTN), two adenosine analogs with related bioactivity profiles as both mimic adenosine and can inhibit some of the processes that are adenosine dependent. Within the pathway, cns1 catalyzes the last step by converting the cns2 product 2'-carbonyl-3'-deoxyadenosine (2'-C-3'-dA) into cordycepin (3'-deoxyadenosine). The first step of cordycepin biosynthesis involves hydroxyl phosphorylation of the 3'-OH position on adenosine to produce adenosine-3'-monophosphate (3'-AMP), catalyzed by kinase activity of cns3. Next, 3'-AMP is dephosphorylated to 2'-carbonyl-3'-deoxyadenosine by cns2, which is finally converted to cordycepin by the oxidoreductase cns1. Pentostatin production is mediated by the ATP phosphoribosyltransferase activity of cns3 on adenosine to inhibit the activity of adenosine deaminase (ADA) to prevent COR deamination to 3'-deoxyinosine (3'-dI). The sequence is that of Oxidoreductase cns1 from Cordyceps militaris (strain CM01) (Caterpillar fungus).